The primary structure comprises 155 residues: SsrA-binding protein (155 aa).

This sequence belongs to the SmpB family.

The protein localises to the cytoplasm. Required for rescue of stalled ribosomes mediated by trans-translation. Binds to transfer-messenger RNA (tmRNA), required for stable association of tmRNA with ribosomes. tmRNA and SmpB together mimic tRNA shape, replacing the anticodon stem-loop with SmpB. tmRNA is encoded by the ssrA gene; the 2 termini fold to resemble tRNA(Ala) and it encodes a 'tag peptide', a short internal open reading frame. During trans-translation Ala-aminoacylated tmRNA acts like a tRNA, entering the A-site of stalled ribosomes, displacing the stalled mRNA. The ribosome then switches to translate the ORF on the tmRNA; the nascent peptide is terminated with the 'tag peptide' encoded by the tmRNA and targeted for degradation. The ribosome is freed to recommence translation, which seems to be the essential function of trans-translation. In Ligilactobacillus salivarius (strain UCC118) (Lactobacillus salivarius), this protein is SsrA-binding protein.